We begin with the raw amino-acid sequence, 22 residues long: Superoxide dismutase [Cu-Zn] 2 (22 aa).

Belongs to the Cu-Zn superoxide dismutase family. As to quaternary structure, homodimer. The cofactor is Cu cation. It depends on Zn(2+) as a cofactor. As to expression, dominant isozyme in roots.

Its subcellular location is the cytoplasm. The enzyme catalyses 2 superoxide + 2 H(+) = H2O2 + O2. In terms of biological role, destroys radicals which are normally produced within the cells and which are toxic to biological systems. The protein is Superoxide dismutase [Cu-Zn] 2 of Picea abies (Norway spruce).